A 466-amino-acid polypeptide reads, in one-letter code: Fumarate hydratase class II (466 aa).

Substrate is bound by residues 99-101, 129-132, 139-141, and threonine 187; these read SGT, HPND, and SSN. Residue histidine 188 is the Proton donor/acceptor of the active site. Serine 318 is a catalytic residue. Residues serine 319 and 324–326 contribute to the substrate site; that span reads KVN.

It belongs to the class-II fumarase/aspartase family. Fumarase subfamily. As to quaternary structure, homotetramer.

The protein resides in the cytoplasm. The catalysed reaction is (S)-malate = fumarate + H2O. It participates in carbohydrate metabolism; tricarboxylic acid cycle; (S)-malate from fumarate: step 1/1. Involved in the TCA cycle. Catalyzes the stereospecific interconversion of fumarate to L-malate. The polypeptide is Fumarate hydratase class II (Thermus thermophilus (strain ATCC BAA-163 / DSM 7039 / HB27)).